We begin with the raw amino-acid sequence, 659 residues long: DNA ligase (659 aa).

NAD(+)-binding positions include 32–36 (DFEYD), 81–82 (SL), and Glu-111. Lys-113 functions as the N6-AMP-lysine intermediate in the catalytic mechanism. NAD(+) is bound by residues Arg-134, Glu-168, Lys-280, and Lys-304. The Zn(2+) site is built by Cys-398, Cys-401, Cys-416, and Cys-421. The BRCT domain occupies 585–655 (ETNSIYFQKR…KELNIPIINE (71 aa)).

This sequence belongs to the NAD-dependent DNA ligase family. LigA subfamily. Mg(2+) is required as a cofactor. Mn(2+) serves as cofactor.

The catalysed reaction is NAD(+) + (deoxyribonucleotide)n-3'-hydroxyl + 5'-phospho-(deoxyribonucleotide)m = (deoxyribonucleotide)n+m + AMP + beta-nicotinamide D-nucleotide.. Its function is as follows. DNA ligase that catalyzes the formation of phosphodiester linkages between 5'-phosphoryl and 3'-hydroxyl groups in double-stranded DNA using NAD as a coenzyme and as the energy source for the reaction. It is essential for DNA replication and repair of damaged DNA. The protein is DNA ligase of Mycoplasma genitalium (strain ATCC 33530 / DSM 19775 / NCTC 10195 / G37) (Mycoplasmoides genitalium).